The primary structure comprises 144 residues: Prefoldin subunit alpha (144 aa).

It belongs to the prefoldin alpha subunit family. As to quaternary structure, heterohexamer of two alpha and four beta subunits.

Its subcellular location is the cytoplasm. Molecular chaperone capable of stabilizing a range of proteins. Seems to fulfill an ATP-independent, HSP70-like function in archaeal de novo protein folding. This is Prefoldin subunit alpha from Methanococcus aeolicus (strain ATCC BAA-1280 / DSM 17508 / OCM 812 / Nankai-3).